Here is a 136-residue protein sequence, read N- to C-terminus: Urease subunit beta (136 aa).

The segment at 113–136 is disordered; it reads NDEYAGVFGDNGAENVNKKGGKRS.

It belongs to the urease beta subunit family. Heterotrimer of UreA (gamma), UreB (beta) and UreC (alpha) subunits. Three heterotrimers associate to form the active enzyme.

Its subcellular location is the cytoplasm. The enzyme catalyses urea + 2 H2O + H(+) = hydrogencarbonate + 2 NH4(+). Its pathway is nitrogen metabolism; urea degradation; CO(2) and NH(3) from urea (urease route): step 1/1. This Staphylococcus aureus (strain USA300) protein is Urease subunit beta.